A 499-amino-acid polypeptide reads, in one-letter code: MPKIMIQGTASSVGKSIIVAALCRIFKQDGFKVCPYKSQNMSLNSYITLDGREMGRAQVLQAYASGLEPEVYMNPILLKPTTDKNCQVIIRGEVYCNSSAREYYNMKKEFVPMLKKDFEILEDKFDIVVIEGAGSPAEINLRDNDIVNMGLAEMVDSPVILVGDIDKGGVFASLLGTIMLLTEKEKSRVKGTIINKFRGDVDILKPGLSMIEEKIKVPSIGVIPYFRLALEDEDSAVDFNTKISAPIDIAIIKLPHISNFTDMDPLKIEEDVSLRYVTSADDFGNPDLLIIPGSKNTIEDLLYIRKVGIEDKIKKYSSRDGFIFGICGGYQMLGTYIEDPLGVETKVKAVEGMNILDVSTVFAKEKITTRVKGKVCGLTENIDIYGYEIHMGSCNYGKKAKPLVEITDKNGCSCNFKEGAINPGRNVMGTYIHGIFDGAELRQYIMNTLRSRRGIKHKNSKVYENLRDGEIDKLADIVRSSLDMKKVYEILNVKSKFME.

The GATase cobBQ-type domain maps to proline 246–leucine 441. Cysteine 327 acts as the Nucleophile in catalysis. The active site involves histidine 433.

This sequence belongs to the CobB/CobQ family. CobQ subfamily.

It functions in the pathway cofactor biosynthesis; adenosylcobalamin biosynthesis. Catalyzes amidations at positions B, D, E, and G on adenosylcobyrinic A,C-diamide. NH(2) groups are provided by glutamine, and one molecule of ATP is hydrogenolyzed for each amidation. This is Cobyric acid synthase from Clostridium kluyveri (strain NBRC 12016).